Reading from the N-terminus, the 568-residue chain is Transport inhibitor response 1-like protein Os11g0515500 (568 aa).

Positions 1–45 (MVFFPEEVVEHILGFLASHRDRNAVSLVCREWYRVERLSRRSVLV) constitute an F-box domain. Residues Lys69, 103–104 (KR), and Arg335 contribute to the 1D-myo-inositol hexakisphosphate site. Positions 338–343 (PANANA) are interaction with auxin-responsive proteins. Position 390–392 (390–392 (SFR)) interacts with 1D-myo-inositol hexakisphosphate. The segment at 394 to 398 (CVLDP) is interaction with auxin-responsive proteins. Arg425 lines the 1D-myo-inositol hexakisphosphate pocket. The segment at 453-454 (AF) is interaction with auxin-responsive proteins. 1D-myo-inositol hexakisphosphate is bound by residues 473–474 (KK) and Arg498.

As to quaternary structure, part of a SCF (SKP1-cullin-F-box) protein ligase complex. May interact with auxin and auxin-responsive proteins.

It is found in the nucleus. Its pathway is protein modification; protein ubiquitination. The polypeptide is Transport inhibitor response 1-like protein Os11g0515500 (Oryza sativa subsp. japonica (Rice)).